Consider the following 523-residue polypeptide: Magnesium/proton exchanger 1 (523 aa).

Transmembrane regions (helical) follow at residues 24-44, 88-108, 125-145, 157-177, 185-205, 325-345, 349-369, 377-397, 428-448, 461-481, and 495-515; these read LLPI…CFIG, IADV…LATI, GTLV…CVVM, LGVW…LYII, VITL…LLHA, VIGI…AFVP, IAHG…IAYG, ISCV…AAGT, VNIY…NYFV, LSFS…VLVL, and MWAW…VVLS.

The protein belongs to the Ca(2+):cation antiporter (CaCA) (TC 2.A.19) family. MHX subfamily.

The protein resides in the vacuole membrane. In terms of biological role, vacuolar transporter that exchanges protons with Mg(2+), Zn(2+) and Fe(2+) ions. May control the partitioning of Mg(2+) and Zn(2+) between plant organs. This is Magnesium/proton exchanger 1 (MHX1) from Oryza sativa subsp. japonica (Rice).